Reading from the N-terminus, the 256-residue chain is 5-keto-4-deoxy-D-glucarate aldolase (256 aa).

The active-site Proton acceptor is the H50. Q151 contacts substrate. E153 contacts Mg(2+). The substrate site is built by S178 and D179. D179 is a binding site for Mg(2+).

Belongs to the HpcH/HpaI aldolase family. KDGluc aldolase subfamily. As to quaternary structure, homohexamer; trimer of dimers. Mg(2+) is required as a cofactor.

It catalyses the reaction 5-dehydro-4-deoxy-D-glucarate = 2-hydroxy-3-oxopropanoate + pyruvate. It carries out the reaction 2-dehydro-3-deoxy-D-glucarate = 2-hydroxy-3-oxopropanoate + pyruvate. Its pathway is carbohydrate acid metabolism; galactarate degradation; D-glycerate from galactarate: step 2/3. Catalyzes the reversible retro-aldol cleavage of both 5-keto-4-deoxy-D-glucarate and 2-keto-3-deoxy-D-glucarate to pyruvate and tartronic semialdehyde. This Shigella boydii serotype 4 (strain Sb227) protein is 5-keto-4-deoxy-D-glucarate aldolase.